The following is a 452-amino-acid chain: Phosphoglucosamine mutase (452 aa).

Serine 112 acts as the Phosphoserine intermediate in catalysis. Residues serine 112, aspartate 251, aspartate 253, and aspartate 255 each contribute to the Mg(2+) site. Residue serine 112 is modified to Phosphoserine.

The protein belongs to the phosphohexose mutase family. Mg(2+) is required as a cofactor. Post-translationally, activated by phosphorylation.

The enzyme catalyses alpha-D-glucosamine 1-phosphate = D-glucosamine 6-phosphate. In terms of biological role, catalyzes the conversion of glucosamine-6-phosphate to glucosamine-1-phosphate. This chain is Phosphoglucosamine mutase, found in Bordetella pertussis (strain Tohama I / ATCC BAA-589 / NCTC 13251).